Reading from the N-terminus, the 79-residue chain is Protein RALF-like 15 (79 aa).

A signal peptide spans 1 to 28 (MGMSKSIKVIVSLALILFLALAATKVEA). 2 cysteine pairs are disulfide-bonded: C46–C54 and C66–C72.

This sequence belongs to the plant rapid alkalinization factor (RALF) family.

Its subcellular location is the secreted. Cell signaling peptide that may regulate plant stress, growth, and development. Mediates a rapid alkalinization of extracellular space by mediating a transient increase in the cytoplasmic Ca(2+) concentration leading to a calcium-dependent signaling events through a cell surface receptor and a concomitant activation of some intracellular mitogen-activated protein kinases. This is Protein RALF-like 15 (RALFL15) from Arabidopsis thaliana (Mouse-ear cress).